A 158-amino-acid chain; its full sequence is C-type lectin TsL (158 aa).

An N-terminal signal peptide occupies residues 1–23; that stretch reads MGRFIFVSFGLLVVFLSLSGAKG. One can recognise a C-type lectin domain in the interval 24–158; sequence SCCTNDSLPM…KNSFLCQCKF (135 aa). Intrachain disulfides connect cysteine 26–cysteine 37, cysteine 54–cysteine 154, cysteine 61–cysteine 156, and cysteine 129–cysteine 146. Asparagine 28 carries N-linked (GlcNAc...) (high mannose) asparagine glycosylation. The Ca(2+) site is built by glutamine 119, aspartate 121, glutamate 127, asparagine 142, and aspartate 143. The short motif at 119–121 is the Galactose-binding element; that stretch reads QPD.

This sequence belongs to the true venom lectin family. In terms of assembly, homodimer; disulfide-linked. Expressed by the venom gland.

The protein localises to the secreted. Functionally, galactose-binding protein which recognizes specific carbohydrate structures and agglutinates a variety of animal cells by binding to cell-surface glycoproteins and glycolipids. May be a calcium-dependent lectin. In Trimeresurus stejnegeri (Chinese green tree viper), this protein is C-type lectin TsL.